The primary structure comprises 166 residues: Large ribosomal subunit protein uL10 (166 aa).

The protein belongs to the universal ribosomal protein uL10 family. As to quaternary structure, part of the ribosomal stalk of the 50S ribosomal subunit. The N-terminus interacts with L11 and the large rRNA to form the base of the stalk. The C-terminus forms an elongated spine to which L12 dimers bind in a sequential fashion forming a multimeric L10(L12)X complex.

Forms part of the ribosomal stalk, playing a central role in the interaction of the ribosome with GTP-bound translation factors. The chain is Large ribosomal subunit protein uL10 from Bacillus cereus (strain 03BB102).